A 230-amino-acid polypeptide reads, in one-letter code: Prolactin-3D1 (230 aa).

The N-terminal stretch at 1-29 (MQLTLTLSRASGMQLFLLVSSLLLWEKVA) is a signal peptide. 2 disulfides stabilise this stretch: C81–C200 and C217–C225. Residues N109 and N158 are each glycosylated (N-linked (GlcNAc...) asparagine).

It belongs to the somatotropin/prolactin family.

The protein resides in the secreted. This chain is Prolactin-3D1 (Prl3d1), found in Rattus norvegicus (Rat).